The following is a 156-amino-acid chain: Small ribosomal subunit protein uS7 (156 aa).

This sequence belongs to the universal ribosomal protein uS7 family. Part of the 30S ribosomal subunit. Contacts proteins S9 and S11.

In terms of biological role, one of the primary rRNA binding proteins, it binds directly to 16S rRNA where it nucleates assembly of the head domain of the 30S subunit. Is located at the subunit interface close to the decoding center, probably blocks exit of the E-site tRNA. The polypeptide is Small ribosomal subunit protein uS7 (Bacillus cytotoxicus (strain DSM 22905 / CIP 110041 / 391-98 / NVH 391-98)).